The sequence spans 97 residues: Large ribosomal subunit protein eL21 (97 aa).

The protein belongs to the eukaryotic ribosomal protein eL21 family.

The polypeptide is Large ribosomal subunit protein eL21 (Methanosarcina barkeri (strain Fusaro / DSM 804)).